The following is a 132-amino-acid chain: Tumor suppressor ARF (132 aa).

The segment at 1 to 64 (MVRRFLVTLR…LGQQPLPRRP (64 aa)) is interaction with CDK5RAP3 and MDM2. Residues 56 to 132 (GQQPLPRRPG…CLGPSARGPG (77 aa)) are disordered. The span at 71–83 (RPSGGAAAAPRRG) shows a compositional bias: low complexity. Positions 84 to 99 (AQLRRPRHSHPTRARR) are enriched in basic residues. The segment covering 103-117 (GLPGHAGGAAPGRGA) has biased composition (gly residues).

In terms of assembly, does not interact with cyclins, CDK1, CDK2, CDK4, CDK5 or CDK6. Binds to BCL6, E2F1, HUWE1, MDM2, MYC, NPM1/B23, TOP1/TOPOI and UBE2I/UBC9. Interacts with TBRG1 and COMMD1. Interacts with CDKN2AIP and E4F1. Interacts with CDK5RAP3 and MDM2; form a ternary complex involved in regulation of p53/TP53. Interacts with NOP53; the interaction is direct and promotes ARF nucleoplasmic relocalization and ubiquitin-mediated proteasomal degradation. Interacts with TTF1 (via the N-terminal region (NRD) and a C-terminal region); the interaction is direct and inhibits the nucleolar localization of TTF1. Interacts with C1QBP. Post-translationally, ubiquitinated in normal cells by TRIP12 via the ubiquitin fusion degradation (UFD) pathway, a process that mediates ubiquitination at the N-terminus, regardless of the absence of lysine residues. Ubiquitination leads to its proteasomal degradation. In cancer cells, however, TRIP12 is located in a different cell compartment, preventing ubiquitination and degradation.

It localises to the nucleus. The protein resides in the nucleolus. The protein localises to the nucleoplasm. It is found in the mitochondrion. In terms of biological role, capable of inducing cell cycle arrest in G1 and G2 phases. Acts as a tumor suppressor. Binds to MDM2 and blocks its nucleocytoplasmic shuttling by sequestering it in the nucleolus. This inhibits the oncogenic action of MDM2 by blocking MDM2-induced degradation of p53 and enhancing p53-dependent transactivation and apoptosis. Also induces G2 arrest and apoptosis in a p53-independent manner by preventing the activation of cyclin B1/CDC2 complexes. Binds to BCL6 and down-regulates BCL6-induced transcriptional repression. Binds to E2F1 and MYC and blocks their transcriptional activator activity but has no effect on MYC transcriptional repression. Binds to TOP1/TOPOI and stimulates its activity. This complex binds to rRNA gene promoters and may play a role in rRNA transcription and/or maturation. Interacts with NPM1/B23 and promotes its polyubiquitination and degradation, thus inhibiting rRNA processing. Plays a role in inhibiting ribosome biogenesis, perhaps by binding to the nucleolar localization sequence of transcription termination factor TTF1, and thereby preventing nucleolar localization of TTF1. Interacts with COMMD1 and promotes its 'Lys63'-linked polyubiquitination. Interacts with UBE2I/UBC9 and enhances sumoylation of a number of its binding partners including MDM2 and E2F1. Binds to HUWE1 and represses its ubiquitin ligase activity. May play a role in controlling cell proliferation and apoptosis during mammary gland development. May be involved in regulation of autophagy and caspase-independent cell death; the short-lived mitochondrial isoform is stabilized by C1QBP. This Homo sapiens (Human) protein is Tumor suppressor ARF.